Here is an 88-residue protein sequence, read N- to C-terminus: Large ribosomal subunit protein bL31B (88 aa).

The protein belongs to the bacterial ribosomal protein bL31 family. Type B subfamily. In terms of assembly, part of the 50S ribosomal subunit.

The polypeptide is Large ribosomal subunit protein bL31B (Bordetella bronchiseptica (strain ATCC BAA-588 / NCTC 13252 / RB50) (Alcaligenes bronchisepticus)).